The sequence spans 301 residues: MATPTELGFSSPGGGGDDSDDNPPQKRTSKRTASETATEEETKKKKKKKTKHNTKMASPPSNRIWNEEDELSILKGLVDFRAKTGLESKIDWDAFYCYVKGSIHVKVSKCQLMSKTRKLKKKFLDQMEKIDQGNDPHFTRSSETEAFGYSMMIWRKIDAEYTNGVMDKAHQSESGEEVFEEDEEVALIDKGAAKSGKSPHEAVVVVDKITTKKNGTAGKESDDDDDDVLCAVRDAFETTMMSQGLSDYQKKLQLEKLMNLGTGKRRELSNEWKALCVEELKLNINKLRFSAKLAEAANDGK.

A disordered region spans residues 1 to 62; that stretch reads MATPTELGFS…NTKMASPPSN (62 aa). Residues 44–54 are compositionally biased toward basic residues; that stretch reads KKKKKKTKHNT. Positions 268–289 are non-canonical leucine-zipper; that stretch reads LSNEWKALCVEELKLNINKLRF.

Belongs to the GeBP family. As to quaternary structure, homo- and heterodimers. Interacts with GEBP, GPL1 and GPL3. Expressed in the apical meristem and young leaf primordia. Detected in the vascular tissues of cotyledons and leaves, in hydathodes and in the septun of siliques, but not in roots.

It is found in the nucleus. Functionally, probable transcription factor. May play redundant roles with GEBP and GPL1 in cytokinin responses by regulating the transcript levels of type-A ARR response genes. Involved in stress responses. Plays a repressive role in cell expansion by counteracting the positive role of CPR5 in this process, but does not regulate cell proliferation or endoreduplication. This Arabidopsis thaliana (Mouse-ear cress) protein is GLABROUS1 enhancer-binding protein-like 2.